Consider the following 194-residue polypeptide: Peptidyl-tRNA hydrolase (194 aa).

Tyr17 is a binding site for tRNA. The Proton acceptor role is filled by His22. Residues Phe68, Asn70, and Asn116 each contribute to the tRNA site.

The protein belongs to the PTH family. As to quaternary structure, monomer.

It localises to the cytoplasm. It catalyses the reaction an N-acyl-L-alpha-aminoacyl-tRNA + H2O = an N-acyl-L-amino acid + a tRNA + H(+). Hydrolyzes ribosome-free peptidyl-tRNAs (with 1 or more amino acids incorporated), which drop off the ribosome during protein synthesis, or as a result of ribosome stalling. Functionally, catalyzes the release of premature peptidyl moieties from peptidyl-tRNA molecules trapped in stalled 50S ribosomal subunits, and thus maintains levels of free tRNAs and 50S ribosomes. This Shewanella sediminis (strain HAW-EB3) protein is Peptidyl-tRNA hydrolase.